Consider the following 212-residue polypeptide: Nuclear transcription factor Y subunit C-7 (212 aa).

Positions 1–10 (MEENNGNNNH) are enriched in polar residues. 2 disordered regions span residues 1–23 (MEENNGNNNHYLPQPSSSQLPPP) and 190–212 (EWPAVPGDGEEAAGEIGGSSGGN).

The protein belongs to the NFYC/HAP5 subunit family. In terms of assembly, heterotrimeric transcription factor composed of three components, NF-YA, NF-YB and NF-YC. NF-YB and NF-YC must interact and dimerize for NF-YA association and DNA binding. In terms of tissue distribution, expressed in flowers.

The protein localises to the nucleus. Stimulates the transcription of various genes by recognizing and binding to a CCAAT motif in promoters. The protein is Nuclear transcription factor Y subunit C-7 (NFYC7) of Arabidopsis thaliana (Mouse-ear cress).